We begin with the raw amino-acid sequence, 60 residues long: Large ribosomal subunit protein uL30 (60 aa).

Belongs to the universal ribosomal protein uL30 family. In terms of assembly, part of the 50S ribosomal subunit.

The polypeptide is Large ribosomal subunit protein uL30 (Carboxydothermus hydrogenoformans (strain ATCC BAA-161 / DSM 6008 / Z-2901)).